The following is a 489-amino-acid chain: MNFTPTRTPICRKISFASKRGAGSGFGDTNRWKKMADSMESTPLPSVEDRLAVLCPSQELLEYYQKKMANCESENEDLLKKLELYREACEEQHKLEWNLQQREEEIAELQKALSDMQVCLFQEREHVLRLYSENDRLRIRELEDKKKIQNLLALVGPDAGEVTYFHKEPPHRVSILQKTLQAAVACEPSASKADPGVSKRQVRIKDKEGISERHQRDTEMLLLQVEALQAQLGEQTKLSREQVEGLMEDRRIRVEEIQVQHQRNQEKIMELTKSLHHTQELLYESTKDFLQLKFENQNKEKVWMLEKDHLMSKITQYRAQCKKKEDKLGKVVPILHESHHTQNEYIKSLKDKLIQEKKLSNMYQEQCISLEEELARIREEEGVRREIFKDRSNKMGKRLQIMTKRYQALEHRRALEVEGFKTDIKSLRQKLRDLEQMLYKATMNNTHGDQDLAMLCEVRDSNRRAHKIQGELKNLKSKVFGLENALRLC.

Position 38 is a phosphoserine (Ser38). Coiled-coil stretches lie at residues 57–120 and 212–487; these read SQEL…QVCL and ERHQ…NALR.

In Mus musculus (Mouse), this protein is Coiled-coil domain-containing protein 77 (Ccdc77).